The following is a 267-amino-acid chain: Undecaprenyl-diphosphatase (267 aa).

7 helical membrane passes run 39 to 59 (QGLA…ILYF), 87 to 107 (WMIA…KDFI), 111 to 131 (LRSA…LWWV), 149 to 169 (ALFI…RSGA), 189 to 209 (FLMS…KLVT), 218 to 238 (ALSI…HAFL), and 244 to 264 (VGMM…IAFL).

Belongs to the UppP family.

It localises to the cell inner membrane. The enzyme catalyses di-trans,octa-cis-undecaprenyl diphosphate + H2O = di-trans,octa-cis-undecaprenyl phosphate + phosphate + H(+). Functionally, catalyzes the dephosphorylation of undecaprenyl diphosphate (UPP). Confers resistance to bacitracin. The chain is Undecaprenyl-diphosphatase from Photobacterium profundum (strain SS9).